Here is a 76-residue protein sequence, read N- to C-terminus: Small ribosomal subunit protein bS18 (76 aa).

This sequence belongs to the bacterial ribosomal protein bS18 family. As to quaternary structure, part of the 30S ribosomal subunit. Forms a tight heterodimer with protein bS6.

In terms of biological role, binds as a heterodimer with protein bS6 to the central domain of the 16S rRNA, where it helps stabilize the platform of the 30S subunit. This Desulfitobacterium hafniense (strain Y51) protein is Small ribosomal subunit protein bS18.